The sequence spans 266 residues: Beta-lactamase OXA-19 (266 aa).

An N-terminal signal peptide occupies residues 1–20 (MKTFAAYVITACLSSTALAS). The active-site Acyl-ester intermediate is the Ser67. Lys70 is modified (N6-carboxylysine). Residue 205 to 207 (KTG) coordinates substrate.

The protein belongs to the class-D beta-lactamase family.

The enzyme catalyses a beta-lactam + H2O = a substituted beta-amino acid. The sequence is that of Beta-lactamase OXA-19 (bla) from Pseudomonas aeruginosa.